Here is a 116-residue protein sequence, read N- to C-terminus: Cystatin (116 aa).

The short motif at 53–57 (QLVSG) is the Secondary area of contact element. 2 disulfide bridges follow: Cys71–Cys81 and Cys95–Cys115. Position 80 is a phosphoserine (Ser80).

The protein belongs to the cystatin family.

The protein resides in the secreted. Functionally, this protein binds tightly to and inhibits papain and cathepsin B. This is Cystatin from Coturnix japonica (Japanese quail).